We begin with the raw amino-acid sequence, 90 residues long: Small ribosomal subunit protein uS15 (90 aa).

The protein belongs to the universal ribosomal protein uS15 family. As to quaternary structure, part of the 30S ribosomal subunit. Forms a bridge to the 50S subunit in the 70S ribosome, contacting the 23S rRNA.

Functionally, one of the primary rRNA binding proteins, it binds directly to 16S rRNA where it helps nucleate assembly of the platform of the 30S subunit by binding and bridging several RNA helices of the 16S rRNA. Forms an intersubunit bridge (bridge B4) with the 23S rRNA of the 50S subunit in the ribosome. The protein is Small ribosomal subunit protein uS15 of Wolbachia sp. subsp. Brugia malayi (strain TRS).